The following is a 196-amino-acid chain: Protein GrpE (196 aa).

The disordered stretch occupies residues M1–P39.

This sequence belongs to the GrpE family. Homodimer.

It localises to the cytoplasm. In terms of biological role, participates actively in the response to hyperosmotic and heat shock by preventing the aggregation of stress-denatured proteins, in association with DnaK and GrpE. It is the nucleotide exchange factor for DnaK and may function as a thermosensor. Unfolded proteins bind initially to DnaJ; upon interaction with the DnaJ-bound protein, DnaK hydrolyzes its bound ATP, resulting in the formation of a stable complex. GrpE releases ADP from DnaK; ATP binding to DnaK triggers the release of the substrate protein, thus completing the reaction cycle. Several rounds of ATP-dependent interactions between DnaJ, DnaK and GrpE are required for fully efficient folding. The polypeptide is Protein GrpE (Escherichia coli O139:H28 (strain E24377A / ETEC)).